The chain runs to 365 residues: Snurportin-1 (365 aa).

In terms of domain architecture, IBB spans 10–72 (GGVALAAPNS…RLAEGDWAGV (63 aa)). 2 disordered regions span residues 15-34 (AAPN…KGRG) and 69-90 (WAGV…EMEV). Residues 73–90 (ESDEDGGEDGDGEEEMEV) show a composition bias toward acidic residues. An interaction with m3G-cap structure region spans residues 129 to 131 (GKR). A necessary for binding to the m3G-cap structure region spans residues 211–333 (LSSKIQEEEG…GKAQPSAEAA (123 aa)). The tract at residues 317–365 (RSKKLAAGKAQPSAEAAARNGHYELEHLSTPQPANSAQGQEEAGSQMEN) is disordered. Over residues 345–355 (STPQPANSAQG) the composition is skewed to polar residues.

It belongs to the snurportin family.

It is found in the nucleus. The protein localises to the cytoplasm. Functions as an U snRNP-specific nuclear import adapter. Involved in the trimethylguanosine (m3G)-cap-dependent nuclear import of U snRNPs. Binds specifically to the terminal m3G-cap U snRNAs. This chain is Snurportin-1 (SNUPN), found in Gallus gallus (Chicken).